A 367-amino-acid polypeptide reads, in one-letter code: Indole glucosinolate O-methyltransferase 5 (367 aa).

S-adenosyl-L-homocysteine is bound by residues glycine 209, aspartate 232, aspartate 252, methionine 253, and lysine 266. Catalysis depends on histidine 270, which acts as the Proton acceptor.

This sequence belongs to the class I-like SAM-binding methyltransferase superfamily. Cation-independent O-methyltransferase family.

The protein operates within secondary metabolite biosynthesis. Its function is as follows. Involved in indole glucosinolate biosynthesis. Catalyzes methoxylation reactions of the glucosinolate indole ring. Converts the hydroxy intermediates 4-hydroxy-indol-3-yl-methylglucosinolate (4OH-I3M) and 1-hydroxy-indol-3-yl-methylglucosinolate (1OH-I3M) to 4-methoxy-indol-3-yl-methylglucosinolate (4MO-I3M) and 1-methoxy-indol-3-yl-methylglucosinolate, respectively. The polypeptide is Indole glucosinolate O-methyltransferase 5 (Arabidopsis thaliana (Mouse-ear cress)).